The primary structure comprises 458 residues: UDP-N-acetylmuramate--L-alanine ligase (458 aa).

118-124 (GTHGKTT) is a binding site for ATP.

Belongs to the MurCDEF family.

It localises to the cytoplasm. The catalysed reaction is UDP-N-acetyl-alpha-D-muramate + L-alanine + ATP = UDP-N-acetyl-alpha-D-muramoyl-L-alanine + ADP + phosphate + H(+). It participates in cell wall biogenesis; peptidoglycan biosynthesis. Functionally, cell wall formation. In Clostridium botulinum (strain Langeland / NCTC 10281 / Type F), this protein is UDP-N-acetylmuramate--L-alanine ligase.